We begin with the raw amino-acid sequence, 93 residues long: YcgL domain-containing protein KPN78578_22820 (93 aa).

The 85-residue stretch at 1–85 folds into the YcgL domain; that stretch reads MFCVIYRSTK…PSENLLKKHL (85 aa).

This chain is YcgL domain-containing protein KPN78578_22820, found in Klebsiella pneumoniae subsp. pneumoniae (strain ATCC 700721 / MGH 78578).